The chain runs to 763 residues: DNA polymerase 3 (763 aa).

The protein belongs to the DNA polymerase type-B family.

The catalysed reaction is DNA(n) + a 2'-deoxyribonucleoside 5'-triphosphate = DNA(n+1) + diphosphate. The chain is DNA polymerase 3 (dpo3) from Saccharolobus shibatae (strain ATCC 51178 / DSM 5389 / JCM 8931 / NBRC 15437 / B12) (Sulfolobus shibatae).